Reading from the N-terminus, the 562-residue chain is Acetolactate synthase isozyme 1 large subunit (562 aa).

E60 serves as a coordination point for thiamine diphosphate. FAD-binding positions include R162, 264-285, and 307-326; these read HGVR…LGAR and DIDR…IQAD. Residues 393–473 form a thiamine pyrophosphate binding region; that stretch reads QHQMWTAQAY…VKIILMNNEA (81 aa). Mg(2+) contacts are provided by D444 and N471.

Belongs to the TPP enzyme family. As to quaternary structure, dimer of large and small chains. It depends on Mg(2+) as a cofactor. The cofactor is thiamine diphosphate.

It carries out the reaction 2 pyruvate + H(+) = (2S)-2-acetolactate + CO2. It functions in the pathway amino-acid biosynthesis; L-isoleucine biosynthesis; L-isoleucine from 2-oxobutanoate: step 1/4. The protein operates within amino-acid biosynthesis; L-valine biosynthesis; L-valine from pyruvate: step 1/4. This chain is Acetolactate synthase isozyme 1 large subunit (ilvB), found in Escherichia coli (strain K12).